Reading from the N-terminus, the 234-residue chain is ATP-dependent dethiobiotin synthetase BioD (234 aa).

An ATP-binding site is contributed by Gly12 to Ile17. Mg(2+) is bound at residue Thr16. Lys39 is a catalytic residue. Thr43 serves as a coordination point for substrate. ATP contacts are provided by residues Asp47, Glu108 to Gly111, Ser168 to Cys169, and Pro200 to Leu202. Residues Asp47 and Glu108 each contribute to the Mg(2+) site.

It belongs to the dethiobiotin synthetase family. In terms of assembly, homodimer. Mg(2+) is required as a cofactor.

It localises to the cytoplasm. It carries out the reaction (7R,8S)-7,8-diammoniononanoate + CO2 + ATP = (4R,5S)-dethiobiotin + ADP + phosphate + 3 H(+). The catalysed reaction is (7R,8S)-8-amino-7-(carboxyamino)nonanoate + ATP = (4R,5S)-dethiobiotin + ADP + phosphate + H(+). It participates in cofactor biosynthesis; biotin biosynthesis; biotin from 7,8-diaminononanoate: step 1/2. In terms of biological role, catalyzes a mechanistically unusual reaction, the ATP-dependent insertion of CO2 between the N7 and N8 nitrogen atoms of 7,8-diaminopelargonic acid (DAPA, also called 7,8-diammoniononanoate) to form a ureido ring. This cyanobacterium does not encode bioA (which catalyzes the formation of the precursor for this reaction in the cannonical pathway), instead it encodes bioU, which replaces bioA and also performs the first half of the cannonical BioD reaction. Thus in this organism BioD has a different substrate. The polypeptide is ATP-dependent dethiobiotin synthetase BioD (Rippkaea orientalis (strain PCC 8801 / RF-1) (Cyanothece sp. (strain PCC 8801))).